A 460-amino-acid polypeptide reads, in one-letter code: Cysteine--tRNA ligase (460 aa).

C28 serves as a coordination point for Zn(2+). The short motif at 30 to 40 (VTIYDLCHIGH) is the 'HIGH' region element. 3 residues coordinate Zn(2+): C209, H234, and E238. The short motif at 266-270 (KMSKS) is the 'KMSKS' region element. K269 serves as a coordination point for ATP.

The protein belongs to the class-I aminoacyl-tRNA synthetase family. In terms of assembly, monomer. The cofactor is Zn(2+).

Its subcellular location is the cytoplasm. The catalysed reaction is tRNA(Cys) + L-cysteine + ATP = L-cysteinyl-tRNA(Cys) + AMP + diphosphate. The sequence is that of Cysteine--tRNA ligase from Shewanella frigidimarina (strain NCIMB 400).